Consider the following 263-residue polypeptide: Insulin-like growth factor-binding protein 1 (263 aa).

A signal peptide spans Met-1–Gly-25. The 82-residue stretch at Gln-28 to Thr-109 folds into the IGFBP N-terminal domain. Intrachain disulfides connect Cys-32–Cys-59, Cys-35–Cys-61, Cys-43–Cys-62, Cys-50–Cys-65, Cys-73–Cys-86, and Cys-80–Cys-106. Residues Gly-102–Ser-131 form a disordered region. Phosphoserine occurs at positions 122, 127, 130, 148, and 160. Residues Ser-122–Ser-131 show a composition bias toward polar residues. A Phosphotyrosine modification is found at Tyr-162. The Thyroglobulin type-1 domain maps to Lys-177–Cys-255. 3 disulfides stabilise this stretch: Cys-180–Cys-210, Cys-221–Cys-232, and Cys-234–Cys-255. Ser-246 is modified (phosphoserine). Residues Arg-250–Asp-252 carry the Cell attachment site motif.

In terms of assembly, binds equally well IGF1 and IGF2. Interacts with integrin ITGA5:ITGB1. Interacts with VHL; this interaction inhibits HIF1A degradation.

Its subcellular location is the secreted. In terms of biological role, multifunctional protein that plays a critical role in regulating the availability of IGFs such as IGF1 and IGF2 to their receptors and thereby regulates IGF-mediated cellular processes including cell migration, proliferation, differentiation or apoptosis in a cell-type specific manner. Also plays a positive role in cell migration by interacting with integrin ITGA5:ITGB1 through its RGD motif. Mechanistically, binding to integrins leads to activation of focal adhesion kinase/PTK2 and stimulation of the mitogen-activated protein kinase (MAPK) pathway. Regulates cardiomyocyte apoptosis by suppressing HIF-1alpha/HIF1A degradation through ubiquitination. The protein is Insulin-like growth factor-binding protein 1 (IGFBP1) of Bos taurus (Bovine).